The primary structure comprises 86 residues: Large ribosomal subunit protein bL31B (86 aa).

The protein belongs to the bacterial ribosomal protein bL31 family. Type B subfamily. In terms of assembly, part of the 50S ribosomal subunit.

This is Large ribosomal subunit protein bL31B from Streptococcus uberis (strain ATCC BAA-854 / 0140J).